Reading from the N-terminus, the 87-residue chain is Translation initiation factor IF-1 1 (87 aa).

The region spanning Met-1–Lys-72 is the S1-like domain. The segment at Asn-68–Arg-87 is disordered. The span at Pro-77–Arg-87 shows a compositional bias: pro residues.

The protein belongs to the IF-1 family. As to quaternary structure, component of the 30S ribosomal translation pre-initiation complex which assembles on the 30S ribosome in the order IF-2 and IF-3, IF-1 and N-formylmethionyl-tRNA(fMet); mRNA recruitment can occur at any time during PIC assembly.

The protein resides in the cytoplasm. In terms of biological role, one of the essential components for the initiation of protein synthesis. Stabilizes the binding of IF-2 and IF-3 on the 30S subunit to which N-formylmethionyl-tRNA(fMet) subsequently binds. Helps modulate mRNA selection, yielding the 30S pre-initiation complex (PIC). Upon addition of the 50S ribosomal subunit IF-1, IF-2 and IF-3 are released leaving the mature 70S translation initiation complex. This is Translation initiation factor IF-1 1 from Burkholderia lata (strain ATCC 17760 / DSM 23089 / LMG 22485 / NCIMB 9086 / R18194 / 383).